The following is a 138-amino-acid chain: MAEKLKVELVTPYKKVLTEEVDEITATGALGEFGVLPGHAPFLTSLKIGELSYKKDGVISHLALNWGYFEVENDKVTVLVETAEKADEIDLERAKSALGRAEEALKKLNPEDKSFRVYEAALERALIRVQVAGKSGRR.

This sequence belongs to the ATPase epsilon chain family. In terms of assembly, F-type ATPases have 2 components, CF(1) - the catalytic core - and CF(0) - the membrane proton channel. CF(1) has five subunits: alpha(3), beta(3), gamma(1), delta(1), epsilon(1). CF(0) has three main subunits: a, b and c.

The protein resides in the cell inner membrane. Functionally, produces ATP from ADP in the presence of a proton gradient across the membrane. In Geotalea daltonii (strain DSM 22248 / JCM 15807 / FRC-32) (Geobacter daltonii), this protein is ATP synthase epsilon chain.